The following is a 112-amino-acid chain: Putative pterin-4-alpha-carbinolamine dehydratase (112 aa).

The segment at 1–30 is disordered; it reads MSDELQSRTCTPCRGDVPPMTKAEAKRQLA.

This sequence belongs to the pterin-4-alpha-carbinolamine dehydratase family.

It catalyses the reaction (4aS,6R)-4a-hydroxy-L-erythro-5,6,7,8-tetrahydrobiopterin = (6R)-L-erythro-6,7-dihydrobiopterin + H2O. This Aromatoleum aromaticum (strain DSM 19018 / LMG 30748 / EbN1) (Azoarcus sp. (strain EbN1)) protein is Putative pterin-4-alpha-carbinolamine dehydratase.